The sequence spans 877 residues: AP-5 complex subunit beta-1 (877 aa).

In terms of assembly, probably part of the adaptor protein complex 5 (AP-5), a tetramer composed of AP5B1, AP5M1, AP5S1 and AP5Z1. Interacts with ZFYVE26 and SPG11.

Functionally, as part of AP-5, a probable fifth adaptor protein complex, it may be involved in endosomal transport. In Bos taurus (Bovine), this protein is AP-5 complex subunit beta-1 (AP5B1).